The sequence spans 380 residues: S-adenosylmethionine:tRNA ribosyltransferase-isomerase (380 aa).

The span at 1–15 (MHSKHPTDTARRCET) shows a compositional bias: basic and acidic residues. Positions 1–24 (MHSKHPTDTARRCETGTDSSDTAA) are disordered.

This sequence belongs to the QueA family. In terms of assembly, monomer.

It localises to the cytoplasm. The catalysed reaction is 7-aminomethyl-7-carbaguanosine(34) in tRNA + S-adenosyl-L-methionine = epoxyqueuosine(34) in tRNA + adenine + L-methionine + 2 H(+). It participates in tRNA modification; tRNA-queuosine biosynthesis. In terms of biological role, transfers and isomerizes the ribose moiety from AdoMet to the 7-aminomethyl group of 7-deazaguanine (preQ1-tRNA) to give epoxyqueuosine (oQ-tRNA). The polypeptide is S-adenosylmethionine:tRNA ribosyltransferase-isomerase (Oleidesulfovibrio alaskensis (strain ATCC BAA-1058 / DSM 17464 / G20) (Desulfovibrio alaskensis)).